We begin with the raw amino-acid sequence, 157 residues long: 2-C-methyl-D-erythritol 2,4-cyclodiphosphate synthase (157 aa).

The a divalent metal cation site is built by Asp8, His10, and His42. 8–10 (DVH) serves as a coordination point for 4-CDP-2-C-methyl-D-erythritol 2-phosphate. 4-CDP-2-C-methyl-D-erythritol 2-phosphate contacts are provided by residues 56–58 (DIG), 132–135 (STSE), Phe139, and Arg142.

This sequence belongs to the IspF family. Homotrimer. The cofactor is a divalent metal cation.

The catalysed reaction is 4-CDP-2-C-methyl-D-erythritol 2-phosphate = 2-C-methyl-D-erythritol 2,4-cyclic diphosphate + CMP. It functions in the pathway isoprenoid biosynthesis; isopentenyl diphosphate biosynthesis via DXP pathway; isopentenyl diphosphate from 1-deoxy-D-xylulose 5-phosphate: step 4/6. Involved in the biosynthesis of isopentenyl diphosphate (IPP) and dimethylallyl diphosphate (DMAPP), two major building blocks of isoprenoid compounds. Catalyzes the conversion of 4-diphosphocytidyl-2-C-methyl-D-erythritol 2-phosphate (CDP-ME2P) to 2-C-methyl-D-erythritol 2,4-cyclodiphosphate (ME-CPP) with a corresponding release of cytidine 5-monophosphate (CMP). The chain is 2-C-methyl-D-erythritol 2,4-cyclodiphosphate synthase from Dehalococcoides mccartyi (strain CBDB1).